A 159-amino-acid polypeptide reads, in one-letter code: Transmembrane protein 42 (159 aa).

The next 4 membrane-spanning stretches (helical) occupy residues 37 to 57 (FWGV…AASA), 68 to 88 (GFCV…WTFF), 100 to 120 (IASV…GFVL), and 124 to 144 (CQEV…TLIH).

It is found in the membrane. In Bos taurus (Bovine), this protein is Transmembrane protein 42 (TMEM42).